Consider the following 375-residue polypeptide: Odorant receptor 10 (375 aa).

A run of 6 helical transmembrane segments spans residues 32-52 (ISII…GHSW), 58-78 (VIIK…TLIL), 125-145 (NLAL…FTGV), 167-187 (IIYL…IPFT), 250-270 (YICF…LFLL), and 279-299 (IVIV…FYWH).

This sequence belongs to the insect chemoreceptor superfamily. Heteromeric odorant receptor channel (TC 1.A.69) family. As to expression, expressed in female antenna, maxillary palp and proboscis. Expressed in female body. Expressed in male tissues.

Its subcellular location is the cell membrane. Odorant receptor which complexes with Orco, a coreceptor, to form odorant-sensing units, providing sensitive and prolonged odorant signaling and calcium permeability. Can sense indole, 1-octen-3-ol, 3-methyindole and an insect repellent DEET. The chain is Odorant receptor 10 from Aedes albopictus (Asian tiger mosquito).